Here is a 724-residue protein sequence, read N- to C-terminus: Threonine--tRNA ligase 2, cytoplasmic (724 aa).

The residue at position 2 (Ala-2) is an N-acetylalanine. The stretch at 44–72 forms a coiled coil; it reads QAEGPCLTREVAQLRAENRELRHCLYRLR. The interval 90-112 is disordered; it reads RAEAGRAAAGAQPPPSQSLEEDV. One can recognise a TGS domain in the interval 155 to 220; the sequence is DSSNVITVRV…EGDATVELLT (66 aa). Ser-451 carries the post-translational modification Phosphoserine.

This sequence belongs to the class-II aminoacyl-tRNA synthetase family. In terms of assembly, may be a component of the multisynthetase complex (MSC), a large multi-subunit complex which contains at least eight different aminoacyl-tRNA synthetases plus three auxillary subunits AIMP1, AIMP2 and EEF1E1. Interacts with the MSC components EPRS1, AIMP1, AIMP2 and KARS1.

The protein resides in the cytoplasm. Its subcellular location is the nucleus. It carries out the reaction tRNA(Thr) + L-threonine + ATP = L-threonyl-tRNA(Thr) + AMP + diphosphate + H(+). Catalyzes the attachment of threonine to tRNA(Thr) in a two-step reaction: threonine is first activated by ATP to form Thr-AMP and then transferred to the acceptor end of tRNA(Thr). Also edits incorrectly charged tRNA(Thr) via its editing domain, at the post-transfer stage. This Bos taurus (Bovine) protein is Threonine--tRNA ligase 2, cytoplasmic (TARS3).